The primary structure comprises 300 residues: Ribosomal protein bS6--L-glutamate ligase (300 aa).

Residues Leu104–Glu287 form the ATP-grasp domain. Residues Lys141, Glu178–Tyr179, Asp187, and Arg211–Asn213 each bind ATP. Residues Asp248, Glu260, and Asn262 each contribute to the Mg(2+) site. 3 residues coordinate Mn(2+): Asp248, Glu260, and Asn262.

This sequence belongs to the RimK family. The cofactor is Mg(2+). Mn(2+) is required as a cofactor.

Functionally, an L-glutamate ligase that catalyzes the ATP-dependent post-translational addition of glutamate residues to the C-terminus of ribosomal protein bS6 (RpsF). Is also able to catalyze the synthesis of poly-alpha-glutamate in vitro, via ATP hydrolysis from unprotected glutamate as substrate. The number of glutamate residues added to either RpsF or to poly-alpha-glutamate changes with pH. This Salmonella agona (strain SL483) protein is Ribosomal protein bS6--L-glutamate ligase.